Consider the following 674-residue polypeptide: Death-associated protein kinase related (674 aa).

The Protein kinase domain maps to 37-295 (EVEQTPFARG…ATGCLDHIWL (259 aa)). Residues 43–51 (FARGKFAAV) and K66 each bind ATP. D160 acts as the Proton acceptor in catalysis. Disordered stretches follow at residues 308 to 388 (QPQS…GGSI), 412 to 440 (TLTSNSNGHVHKPTQIVTPTRRASDSDKE), 511 to 583 (DSSG…TSGS), and 614 to 650 (TSSASSSNSSSGKSTSAAHHLHHHHMHHHHHHHHHHV). Positions 312–343 (DAEEEEEEDVDDDVEDEEEEEQVEEEEEETQN) are enriched in acidic residues. The span at 352-363 (PQQQQQPVQQHQ) shows a compositional bias: low complexity. Basic residues predominate over residues 373 to 382 (KPTHNGHHRA). 5 positions are modified to phosphoserine: S384, S387, S435, S437, and S521. Low complexity predominate over residues 512 to 525 (SSGSAVARRSGGAV). 2 stretches are compositionally biased toward polar residues: residues 526–541 (TSSSGLHSPTTTSVRL) and 555–564 (YKKQTSQNGC). Low complexity-rich tracts occupy residues 565–583 (SSTSNPSSSPGSSPTTSGS) and 614–631 (TSSASSSNSSSGKSTSAA). The span at 632–650 (HHLHHHHMHHHHHHHHHHV) shows a compositional bias: basic residues.

Belongs to the protein kinase superfamily. Ser/Thr protein kinase family.

The catalysed reaction is L-seryl-[protein] + ATP = O-phospho-L-seryl-[protein] + ADP + H(+). The enzyme catalyses L-threonyl-[protein] + ATP = O-phospho-L-threonyl-[protein] + ADP + H(+). This chain is Death-associated protein kinase related (Drak), found in Drosophila melanogaster (Fruit fly).